A 356-amino-acid polypeptide reads, in one-letter code: Nucleotide-binding protein GDI1189/Gdia_1902 (356 aa).

Residue 20–27 (GLSGAGKS) coordinates ATP. Residue 65–68 (DSRT) participates in GTP binding. The disordered stretch occupies residues 285 to 313 (EPGGTCDSPGKPAHIEKGAAPTDVQSGGA).

This sequence belongs to the RapZ-like family.

Its function is as follows. Displays ATPase and GTPase activities. The sequence is that of Nucleotide-binding protein GDI1189/Gdia_1902 from Gluconacetobacter diazotrophicus (strain ATCC 49037 / DSM 5601 / CCUG 37298 / CIP 103539 / LMG 7603 / PAl5).